A 151-amino-acid polypeptide reads, in one-letter code: UPF0756 membrane protein GWCH70_2680 (151 aa).

4 helical membrane passes run 5 to 25 (ILFLLILFIIGFIAKNQSLMI), 53 to 73 (WGVTVITIAVLAPIATGEIGF), 86 to 106 (WIALLSGIFVALVAKGGVTLL), and 116 to 136 (LVFGTIIAVSLFHGVAVGPLI).

The protein belongs to the UPF0756 family.

It localises to the cell membrane. The protein is UPF0756 membrane protein GWCH70_2680 of Geobacillus sp. (strain WCH70).